A 432-amino-acid chain; its full sequence is MPISKGIFLSLLSTLPLALAGHRSHRCVVPSSNGTRDDSPAIAKVFAQCATDSIIVFQEGVDYNVFQPIKAENLSNVEIRMHGNLHLPQNISAVQEIVKAGNSYWFTLEGPRVDWTGSEDINHGWINSYGQAWWDANPPNGTGIENRPHLLSYTTSDATIKYMRSRKPIAHNCRLHGDDITVTHAIVDAYSTGGFPFNTDGFDVAGTNIRISDSVMYNGDDAIAVGSGSHDIVFERNTIGYQSHGMSIGSLGKDPTDFANITNLRFEDVTVIDALYAARFKSWTGGQGLVKNVTWKNIRVFNVTFPIFVTQSYWDQGANRGDVDESSSVMMEDFTWSDFTGSINTYQPGDGSCASDPCWYNAGLPNLQHTEAIILECNTATSCKNFVTENIQLYPQSMDAPHLICMNATAELNPRLGFDCRNGMYTALSERH.

An N-terminal signal peptide occupies residues 1 to 20 (MPISKGIFLSLLSTLPLALA). N33, N73, N90, and N140 each carry an N-linked (GlcNAc...) asparagine glycan. PbH1 repeat units follow at residues 206–227 (GTNI…AVGS) and 229–250 (SHDI…SIGS). D220 serves as the catalytic Proton donor. H244 is an active-site residue. A glycan (N-linked (GlcNAc...) asparagine) is linked at N260. One copy of the PbH1 3 repeat lies at 261–282 (ITNLRFEDVTVIDALYAARFKS). N292 and N302 each carry an N-linked (GlcNAc...) asparagine glycan. An intrachain disulfide couples C377 to C383. N407 carries an N-linked (GlcNAc...) asparagine glycan.

The protein belongs to the glycosyl hydrolase 28 family.

It is found in the secreted. The enzyme catalyses [(1-&gt;4)-alpha-D-galacturonosyl](n) + H2O = alpha-D-galacturonate + [(1-&gt;4)-alpha-D-galacturonosyl](n-1). In terms of biological role, specific in hydrolyzing the terminal glycosidic bond of polygalacturonic acid and oligogalacturonates. The chain is Probable exopolygalacturonase C (pgxC) from Aspergillus terreus (strain NIH 2624 / FGSC A1156).